A 435-amino-acid polypeptide reads, in one-letter code: ATP-dependent protease ATPase subunit HslU (435 aa).

ATP-binding positions include Val-18, 60-65, Asp-248, Glu-313, and Arg-385; that span reads GVGKTE.

Belongs to the ClpX chaperone family. HslU subfamily. A double ring-shaped homohexamer of HslV is capped on each side by a ring-shaped HslU homohexamer. The assembly of the HslU/HslV complex is dependent on binding of ATP.

It is found in the cytoplasm. ATPase subunit of a proteasome-like degradation complex; this subunit has chaperone activity. The binding of ATP and its subsequent hydrolysis by HslU are essential for unfolding of protein substrates subsequently hydrolyzed by HslV. HslU recognizes the N-terminal part of its protein substrates and unfolds these before they are guided to HslV for hydrolysis. The polypeptide is ATP-dependent protease ATPase subunit HslU (Parvibaculum lavamentivorans (strain DS-1 / DSM 13023 / NCIMB 13966)).